We begin with the raw amino-acid sequence, 666 residues long: Phosphoenolpyruvate carboxykinase (ATP) (666 aa).

2 disordered regions span residues 1-68 and 91-132; these read MATP…AHSP and ASLT…HPAA. Positions 48–58 are enriched in polar residues; sequence APTTPNRSAPT. The segment covering 109 to 123 has biased composition (low complexity); the sequence is KGEAAAQGAPSTPRA. 364 to 371 provides a ligand contact to ATP; that stretch reads GLSGTGKT.

The protein belongs to the phosphoenolpyruvate carboxykinase (ATP) family.

The protein resides in the cytoplasm. It catalyses the reaction oxaloacetate + ATP = phosphoenolpyruvate + ADP + CO2. It functions in the pathway carbohydrate biosynthesis; gluconeogenesis. The polypeptide is Phosphoenolpyruvate carboxykinase (ATP) (Zea mays (Maize)).